We begin with the raw amino-acid sequence, 284 residues long: 2-dehydro-3-deoxyphosphooctonate aldolase (284 aa).

This sequence belongs to the KdsA family.

It is found in the cytoplasm. It carries out the reaction D-arabinose 5-phosphate + phosphoenolpyruvate + H2O = 3-deoxy-alpha-D-manno-2-octulosonate-8-phosphate + phosphate. It participates in carbohydrate biosynthesis; 3-deoxy-D-manno-octulosonate biosynthesis; 3-deoxy-D-manno-octulosonate from D-ribulose 5-phosphate: step 2/3. It functions in the pathway bacterial outer membrane biogenesis; lipopolysaccharide biosynthesis. The chain is 2-dehydro-3-deoxyphosphooctonate aldolase from Escherichia coli O6:H1 (strain CFT073 / ATCC 700928 / UPEC).